The primary structure comprises 91 residues: Non-specific lipid-transfer protein 1 (91 aa).

4 disulfide bridges follow: C4/C51, C14/C28, C29/C74, and C49/C88.

The protein belongs to the plant LTP family. Detected in seeds (at protein level).

Its function is as follows. Plant non-specific lipid-transfer proteins transfer phospholipids as well as galactolipids across membranes. May play a role in wax or cutin deposition in the cell walls of expanding epidermal cells and certain secretory tissues. This is Non-specific lipid-transfer protein 1 from Carum carvi (Caraway).